Consider the following 234-residue polypeptide: Ubiquinone biosynthesis O-methyltransferase (234 aa).

Residues R40, G59, D80, and M123 each contribute to the S-adenosyl-L-methionine site.

It belongs to the methyltransferase superfamily. UbiG/COQ3 family.

The catalysed reaction is a 3-demethylubiquinol + S-adenosyl-L-methionine = a ubiquinol + S-adenosyl-L-homocysteine + H(+). The enzyme catalyses a 3-(all-trans-polyprenyl)benzene-1,2-diol + S-adenosyl-L-methionine = a 2-methoxy-6-(all-trans-polyprenyl)phenol + S-adenosyl-L-homocysteine + H(+). It participates in cofactor biosynthesis; ubiquinone biosynthesis. Functionally, O-methyltransferase that catalyzes the 2 O-methylation steps in the ubiquinone biosynthetic pathway. The sequence is that of Ubiquinone biosynthesis O-methyltransferase from Coxiella burnetii (strain CbuK_Q154) (Coxiella burnetii (strain Q154)).